The sequence spans 413 residues: Imidazolonepropionase (413 aa).

H77 and H79 together coordinate Fe(3+). Zn(2+)-binding residues include H77 and H79. 3 residues coordinate 4-imidazolone-5-propanoate: R86, Y149, and H182. N-formimidoyl-L-glutamate is bound at residue Y149. A Fe(3+)-binding site is contributed by H247. Residue H247 coordinates Zn(2+). Residue Q250 coordinates 4-imidazolone-5-propanoate. A Fe(3+)-binding site is contributed by D322. D322 serves as a coordination point for Zn(2+). The N-formimidoyl-L-glutamate site is built by N324 and G326. 4-imidazolone-5-propanoate is bound at residue T327.

Belongs to the metallo-dependent hydrolases superfamily. HutI family. It depends on Zn(2+) as a cofactor. The cofactor is Fe(3+).

The protein localises to the cytoplasm. It carries out the reaction 4-imidazolone-5-propanoate + H2O = N-formimidoyl-L-glutamate. It functions in the pathway amino-acid degradation; L-histidine degradation into L-glutamate; N-formimidoyl-L-glutamate from L-histidine: step 3/3. Catalyzes the hydrolytic cleavage of the carbon-nitrogen bond in imidazolone-5-propanoate to yield N-formimidoyl-L-glutamate. It is the third step in the universal histidine degradation pathway. The protein is Imidazolonepropionase of Chromobacterium violaceum (strain ATCC 12472 / DSM 30191 / JCM 1249 / CCUG 213 / NBRC 12614 / NCIMB 9131 / NCTC 9757 / MK).